The chain runs to 226 residues: MVKSTTAGNNAVSSLESTDSKKSRKEKSREKEHRRAQCINSAFEILQQHIPYLKSEERKSLPKIKTLRLAMQYIDHLKKLLGGNEMLETDCNESRPLTHSDFRVNISNEIRIRNSYRERAHNQELDEATVKRILAREDQRRRCSSVPEGIQRYTPYQSRQFGPISNNVCNFRHVDANQYNTNFMEYQTQMVQVANFPNQFSHEYYNYGTFPVIDPTSLENSNPILQ.

Residues 1–15 are compositionally biased toward polar residues; it reads MVKSTTAGNNAVSSL. The segment at 1-35 is disordered; that stretch reads MVKSTTAGNNAVSSLESTDSKKSRKEKSREKEHRR. Positions 23-36 are basic motif; sequence SRKEKSREKEHRRA. A bHLH domain is found at 23-77; the sequence is SRKEKSREKEHRRAQCINSAFEILQQHIPYLKSEERKSLPKIKTLRLAMQYIDHL. The segment at 37-77 is helix-loop-helix motif; the sequence is QCINSAFEILQQHIPYLKSEERKSLPKIKTLRLAMQYIDHL.

The protein localises to the nucleus. Functionally, probable transcription factor which regulates early embryonic myogenesis, in cooperation with transcription factors unc-120 and hlh-1. Involved in controlling the number and position of somatic gonadal precursor cells (SGPs) in the gonadal primordium, and embryonic body shape. In Caenorhabditis elegans, this protein is Hand transcription factor 1.